The chain runs to 1073 residues: DNA-directed RNA polymerase subunit beta (1073 aa).

Belongs to the RNA polymerase beta chain family. In terms of assembly, in plastids the minimal PEP RNA polymerase catalytic core is composed of four subunits: alpha, beta, beta', and beta''. When a (nuclear-encoded) sigma factor is associated with the core the holoenzyme is formed, which can initiate transcription.

It localises to the plastid. The protein localises to the chloroplast. The catalysed reaction is RNA(n) + a ribonucleoside 5'-triphosphate = RNA(n+1) + diphosphate. In terms of biological role, DNA-dependent RNA polymerase catalyzes the transcription of DNA into RNA using the four ribonucleoside triphosphates as substrates. In Aethionema grandiflorum (Persian stone-cress), this protein is DNA-directed RNA polymerase subunit beta.